Here is a 146-residue protein sequence, read N- to C-terminus: Large ribosomal subunit protein uL15 (146 aa).

The span at 1–13 (MKLHELKAAEGSR) shows a compositional bias: basic and acidic residues. Residues 1-56 (MKLHELKAAEGSRRVRNRVGRGAATGNGKTSGRGQKGQKARSGGKLRPGFEGGQLP) are disordered. Residues 23–35 (AATGNGKTSGRGQ) are compositionally biased toward gly residues.

The protein belongs to the universal ribosomal protein uL15 family. As to quaternary structure, part of the 50S ribosomal subunit.

Binds to the 23S rRNA. The protein is Large ribosomal subunit protein uL15 of Staphylococcus epidermidis (strain ATCC 35984 / DSM 28319 / BCRC 17069 / CCUG 31568 / BM 3577 / RP62A).